The sequence spans 64 residues: U-poneritoxin(01)-Om1a (64 aa).

An N-terminal signal peptide occupies residues 1-27 (MKPSGLTFAFLVVFMMAIMYNSVQVTA). Residues 28–45 (DADADAEAEALANALAEA) constitute a propeptide that is removed on maturation. At Met-62 the chain carries Methionine amide.

Truncated sequences of this peptide have also been found in the venom. It is possible they have been cleaved in the venom. Expressed by the venom gland.

It is found in the secreted. Functionally, antimicrobial peptide with activities against E.coli (MIC=1.3 uM), S.aureus (MIC=3.1 uM), and S.cerevisiae (MIC=50 uM). Also shows histamine-releasing activity (32.9% at 10 uM). Does not show hemolytic activity, even at 50 uM. It is a short peptide for which no alpha-helical region has been predicted. The chain is U-poneritoxin(01)-Om1a from Odontomachus monticola (Trap-jaw ant).